The following is a 1025-amino-acid chain: Exocyst complex component 6 (1025 aa).

2 stretches are compositionally biased toward basic and acidic residues: residues 1-10 (MSNKKQKEEI) and 22-52 (MVRDKDKEQKEEKREKKEKKRLEKKEAENVK). Disordered stretches follow at residues 1–122 (MSNK…TRHL), 135–154 (LSSQDRSSSLPHSSQDDQAK), and 666–691 (QFGDKNLNNNNNNDDDDDYFDEDENE). A coiled-coil region spans residues 19–68 (LKTMVRDKDKEQKEEKREKKEKKRLEKKEAENVKKEKKKEKKELKKIGKA). Residues 71 to 93 (SGSITSDSSTHSGAQEFDSYGND) show a composition bias toward low complexity. Over residues 104-118 (SIDSNGLSSSGQPMQ) the composition is skewed to polar residues. Composition is skewed to low complexity over residues 135–147 (LSSQDRSSSLPHS) and 666–677 (QFGDKNLNNNNN). The span at 678 to 691 (NDDDDDYFDEDENE) shows a compositional bias: acidic residues.

This sequence belongs to the SEC15 family. The exocyst complex is composed of sec3/exoc1, sec5/exoc2, sec6/exoc3, sec8/exoc4, sec10/exoc5, sec15/exoc6, exo70/exoc7 and exo84/exoc8.

It localises to the cytoplasm. The protein resides in the perinuclear region. Its subcellular location is the midbody. The protein localises to the midbody ring. In terms of biological role, component of the exocyst complex involved in the docking of exocytic vesicles with fusion sites on the plasma membrane. The protein is Exocyst complex component 6 (exoc6) of Dictyostelium discoideum (Social amoeba).